The following is a 1053-amino-acid chain: Translation initiation factor IF-2 (1053 aa).

The segment covering 1–20 has biased composition (polar residues); it reads MSESKNSGENTLSVTPTKTL. The segment at 1–442 is disordered; sequence MSESKNSGEN…TATGGEEEER (442 aa). Low complexity-rich tracts occupy residues 64–76 and 83–102; these read EAAP…ATVT and RPAA…AAVP. 2 stretches are compositionally biased toward pro residues: residues 131-141 and 150-161; these read PAQPKAEPVPA and APVPPVPAPSAP. Low complexity predominate over residues 178–220; sequence PVSQAKPIQTAPVQTAPAAQASASQTTGPRPVAAGPRPATGAA. A compositionally biased stretch (gly residues) spans 255–264; sequence GGRGGPGRGE. Basic and acidic residues-rich tracts occupy residues 279–288 and 295–353; these read LTDEEREARA and RIRE…EAKR. Residues 375-386 are compositionally biased toward low complexity; sequence TATAAAPAAAAP. Residues 550–720 form the tr-type G domain; that stretch reads PRPPVVTIMG…ALQAELLDLK (171 aa). Residues 559 to 566 form a G1 region; the sequence is GHVDHGKT. Position 559 to 566 (559 to 566) interacts with GTP; it reads GHVDHGKT. Residues 584 to 588 form a G2 region; sequence GITQH. Residues 606-609 form a G3 region; the sequence is DTPG. GTP-binding positions include 606–610 and 660–663; these read DTPGH and NKID. The interval 660-663 is G4; the sequence is NKID. The tract at residues 696-698 is G5; sequence SAT.

Belongs to the TRAFAC class translation factor GTPase superfamily. Classic translation factor GTPase family. IF-2 subfamily.

Its subcellular location is the cytoplasm. Functionally, one of the essential components for the initiation of protein synthesis. Protects formylmethionyl-tRNA from spontaneous hydrolysis and promotes its binding to the 30S ribosomal subunits. Also involved in the hydrolysis of GTP during the formation of the 70S ribosomal complex. This chain is Translation initiation factor IF-2, found in Beijerinckia indica subsp. indica (strain ATCC 9039 / DSM 1715 / NCIMB 8712).